The following is a 218-amino-acid chain: Large ribosomal subunit protein bL25 (218 aa).

Positions 178-218 are disordered; that stretch reads VTPPTVTEDPDATEEDNTTAESVEATGERNDDNLDRPGRVE. Acidic residues predominate over residues 185 to 195; it reads EDPDATEEDNT. Over residues 203–218 the composition is skewed to basic and acidic residues; that stretch reads TGERNDDNLDRPGRVE.

It belongs to the bacterial ribosomal protein bL25 family. CTC subfamily. As to quaternary structure, part of the 50S ribosomal subunit; part of the 5S rRNA/L5/L18/L25 subcomplex. Contacts the 5S rRNA. Binds to the 5S rRNA independently of L5 and L18.

Its function is as follows. This is one of the proteins that binds to the 5S RNA in the ribosome where it forms part of the central protuberance. The chain is Large ribosomal subunit protein bL25 from Shouchella clausii (strain KSM-K16) (Alkalihalobacillus clausii).